We begin with the raw amino-acid sequence, 753 residues long: MTILNHTLGFPRVGLRRELKKAQESYWAGNSTREELLAVGRELRARHWDQQKQAGIDLLPVGDFAWYDHVLTTSLLLGNVPPRHQNKDGSVDIDTLFRIGRGRAPTGEPAAAAEMTKWFNTNYHYMVPEFVKGQQFKLTWTQLLEEVDEALALGHKVKPVLLGPITYLWLGKVKGEQFDRLSLLNDILPVYQQVLAELAKRGIEWVQIDEPALVLELPQAWLDAYKPAYDALQGQVKLLLTTYFEGVTPNLDTITALPVQGLHVDLVHGKDDVAELHKRLPSDWLLSAGLINGRNVWRADLTEKYAQIKDIVGKRDLWVASSCSLLHSPIDLSVETRLDAEVKSWFAFALQKCHELALLRDALNSGDTAALAEWSAPIQARRHSTRVHNPAVEKRLAAITAQDSQRANVYEVRAEAQRARFKLPAWPTTTIGSFPQTTEIRTLRLDFKKGNLDANNYRTGIAEHIKQAIVEQERLGLDVLVHGEAERNDMVEYFGEHLDGFVFTQNGWVQSYGSRCVKPPIVIGDVSRPAPITVEWAKYAQSLTDKPVKGMLTGPVTILCWSFPREDVSRETIAKQIALALRDEVADLEAAGIGIIQIDEPALREGLPLRRSDWDAYLQWGVEAFRINAAVAKDDTQIHTHMCYCEFNDIMDSIAALDADVITIETSRSDMELLESFEEFDYPNEIGPGVYDIHSPNVPSVEWIEALLKKAAKRIPAERLWVNPDCGLKTRGWPETRAALANMVQAAQNLRRG.

Residues 17–20 (RELK) and K117 each bind 5-methyltetrahydropteroyltri-L-glutamate. L-homocysteine-binding positions include 431-433 (IGS) and E484. Residues 431-433 (IGS) and E484 contribute to the L-methionine site. 5-methyltetrahydropteroyltri-L-glutamate contacts are provided by residues 515–516 (RC) and W561. D599 is a binding site for L-homocysteine. D599 is a binding site for L-methionine. E605 contributes to the 5-methyltetrahydropteroyltri-L-glutamate binding site. H641, C643, and E665 together coordinate Zn(2+). H694 functions as the Proton donor in the catalytic mechanism. C726 is a binding site for Zn(2+).

It belongs to the vitamin-B12 independent methionine synthase family. Zn(2+) is required as a cofactor.

The catalysed reaction is 5-methyltetrahydropteroyltri-L-glutamate + L-homocysteine = tetrahydropteroyltri-L-glutamate + L-methionine. The protein operates within amino-acid biosynthesis; L-methionine biosynthesis via de novo pathway; L-methionine from L-homocysteine (MetE route): step 1/1. Its function is as follows. Catalyzes the transfer of a methyl group from 5-methyltetrahydrofolate to homocysteine resulting in methionine formation. The sequence is that of 5-methyltetrahydropteroyltriglutamate--homocysteine methyltransferase from Escherichia coli O6:H1 (strain CFT073 / ATCC 700928 / UPEC).